The following is a 245-amino-acid chain: Orotidine 5'-phosphate decarboxylase (245 aa).

Substrate is bound by residues D22, K44, 71-80 (DLKFHDIPNT), T131, R192, Q201, G221, and R222. The Proton donor role is filled by K73.

This sequence belongs to the OMP decarboxylase family. Type 1 subfamily. As to quaternary structure, homodimer.

The catalysed reaction is orotidine 5'-phosphate + H(+) = UMP + CO2. It participates in pyrimidine metabolism; UMP biosynthesis via de novo pathway; UMP from orotate: step 2/2. Functionally, catalyzes the decarboxylation of orotidine 5'-monophosphate (OMP) to uridine 5'-monophosphate (UMP). This Salmonella newport (strain SL254) protein is Orotidine 5'-phosphate decarboxylase.